A 183-amino-acid polypeptide reads, in one-letter code: Proton-transporting V-type ATPase complex assembly regulator TMEM9 (183 aa).

The N-terminal stretch at 1 to 20 (MKLLCLVAVVGCLLVPPAQA) is a signal peptide. N-linked (GlcNAc...) asparagine glycosylation is found at Asn21, Asn38, and Asn47. Residues 21–89 (NKSSEDIRCK…YEERSTTTIK (69 aa)) lie on the Extracellular side of the membrane. The chain crosses the membrane as a helical span at residues 90-110 (VIIVIYLSVVGALLLYMAFLM). The Cytoplasmic segment spans residues 111–183 (LVDPLIRKPD…TVFDRHKMLS (73 aa)). Phosphoserine is present on Ser144.

Belongs to the TMEM9 family. In terms of assembly, interacts with the v-ATPase accessory protein ATP6AP2 and with the v-ATPase complex subunit ATP6V0D1; these interactions lead to the assembly of the v-ATPase complex. In terms of processing, N-glycosylated. In terms of tissue distribution, expressed in heart, lung, kidney, liver and intestines. Enriched in the hepatocytes around the central vein.

The protein resides in the lysosome membrane. It is found in the late endosome membrane. It localises to the endosome. Its subcellular location is the multivesicular body membrane. Functionally, transmembrane protein that binds to and facilitates the assembly of lysosomal proton-transporting V-type ATPase (v-ATPase), resulting in enhanced lysosomal acidification and trafficking. By bringing the v-ATPase accessory protein ATP6AP2 and the v-ATPase subunit ATP6V0D1 together, allows v-ATPase complex formation and activation. TMEM9-controlled vesicular acidification induces hyperactivation of Wnt/beta-catenin signaling, involved in development, tissue homeostasis and tissue regeneration, through lysosomal degradation of adenomatous polyposis coli/APC. In the liver, involved in hepatic regeneration. The protein is Proton-transporting V-type ATPase complex assembly regulator TMEM9 of Mus musculus (Mouse).